Here is a 563-residue protein sequence, read N- to C-terminus: Inositol-3-phosphate synthase 1-A (563 aa).

This sequence belongs to the myo-inositol 1-phosphate synthase family. NAD(+) is required as a cofactor.

The protein localises to the cytoplasm. The enzyme catalyses D-glucose 6-phosphate = 1D-myo-inositol 3-phosphate. The protein operates within polyol metabolism; myo-inositol biosynthesis; myo-inositol from D-glucose 6-phosphate: step 1/2. Key enzyme in myo-inositol biosynthesis pathway that catalyzes the conversion of glucose 6-phosphate to 1-myo-inositol 1-phosphate in a NAD-dependent manner. Rate-limiting enzyme in the synthesis of all inositol-containing compounds. In Xenopus laevis (African clawed frog), this protein is Inositol-3-phosphate synthase 1-A (isyna1-a).